The sequence spans 732 residues: 1,4-alpha-glucan branching enzyme GlgB (732 aa).

Asp409 acts as the Nucleophile in catalysis. The active-site Proton donor is the Glu462.

It belongs to the glycosyl hydrolase 13 family. GlgB subfamily. In terms of assembly, monomer.

The enzyme catalyses Transfers a segment of a (1-&gt;4)-alpha-D-glucan chain to a primary hydroxy group in a similar glucan chain.. Its pathway is glycan biosynthesis; glycogen biosynthesis. In terms of biological role, catalyzes the formation of the alpha-1,6-glucosidic linkages in glycogen by scission of a 1,4-alpha-linked oligosaccharide from growing alpha-1,4-glucan chains and the subsequent attachment of the oligosaccharide to the alpha-1,6 position. The sequence is that of 1,4-alpha-glucan branching enzyme GlgB from Corynebacterium diphtheriae (strain ATCC 700971 / NCTC 13129 / Biotype gravis).